The following is a 378-amino-acid chain: Spermidine/putrescine import ATP-binding protein PotA (378 aa).

The ABC transporter domain maps to 18–248; sequence VQLAGIRKCF…PKNLFVAGFI (231 aa). Residue 50 to 57 participates in ATP binding; sequence GPSGCGKT.

It belongs to the ABC transporter superfamily. Spermidine/putrescine importer (TC 3.A.1.11.1) family. The complex is composed of two ATP-binding proteins (PotA), two transmembrane proteins (PotB and PotC) and a solute-binding protein (PotD).

It is found in the cell inner membrane. The catalysed reaction is ATP + H2O + polyamine-[polyamine-binding protein]Side 1 = ADP + phosphate + polyamineSide 2 + [polyamine-binding protein]Side 1.. Its function is as follows. Part of the ABC transporter complex PotABCD involved in spermidine/putrescine import. Responsible for energy coupling to the transport system. The chain is Spermidine/putrescine import ATP-binding protein PotA from Shigella dysenteriae serotype 1 (strain Sd197).